Here is a 423-residue protein sequence, read N- to C-terminus: Phosphoribosylamine--glycine ligase (423 aa).

Positions 107-314 constitute an ATP-grasp domain; it reads KAFMAKYNIP…LSDLVEAAID (208 aa). 133–194 contacts ATP; that stretch reads VNQKGAPIVI…EDFLQGEEAS (62 aa). 2 residues coordinate Mg(2+): Glu284 and Asn286.

It belongs to the GARS family. It depends on Mg(2+) as a cofactor. Mn(2+) is required as a cofactor.

It catalyses the reaction 5-phospho-beta-D-ribosylamine + glycine + ATP = N(1)-(5-phospho-beta-D-ribosyl)glycinamide + ADP + phosphate + H(+). It participates in purine metabolism; IMP biosynthesis via de novo pathway; N(1)-(5-phospho-D-ribosyl)glycinamide from 5-phospho-alpha-D-ribose 1-diphosphate: step 2/2. The polypeptide is Phosphoribosylamine--glycine ligase (Neisseria meningitidis serogroup B (strain ATCC BAA-335 / MC58)).